We begin with the raw amino-acid sequence, 173 residues long: Glucagon family neuropeptides (173 aa).

Positions Met1–Ser22 are cleaved as a signal peptide. Residues Ser23–Glu80 constitute a propeptide that is removed on maturation. Lys166 is subject to Lysine amide. The propeptide occupies Leu170–Leu173.

This sequence belongs to the glucagon family.

The protein resides in the secreted. Functionally, primary role of GHRH is to release GH from the pituitary. Its function is as follows. PACAP plays pivotal roles as a neurotransmitter and/or a neuromodulator. This is Glucagon family neuropeptides from Oncorhynchus nerka (Sockeye salmon).